The primary structure comprises 352 residues: MFDLNQSLFLRALRRQPVERTPIWIMRQAGRYLPEYRKVREHAGDFLNLCKNPELACEVTLQPLRRYALDAAILFSDILTIPDAMGLGLYFAEGEGPCFTNPLQDTKAIHTLKIPSIPESLSYVFDAARLIRQEMPKELPLIGFSGSPWTLACYMVEGGSSRDFKRILNLIYTEKEAAHLLLNKLAVSVTAYLIEQIKAGVNAVMIFDTWGGVLTPQNYKDFSLAYMHQIVQQLKKEYPDIPVILFTKNGGQWLEWMAETGCDALGVDWTCDLASARKRVGGKVALQGNLDPAVLLTTKNCIRREVGSVLASYGYGTGHIFNLGHGITPDVPPENVAIMIEAVHEISPQYHL.

Substrate-binding positions include 27 to 31 (RQAGR), aspartate 77, tyrosine 154, threonine 209, and histidine 325.

It belongs to the uroporphyrinogen decarboxylase family. As to quaternary structure, homodimer.

The protein localises to the cytoplasm. The catalysed reaction is uroporphyrinogen III + 4 H(+) = coproporphyrinogen III + 4 CO2. It participates in porphyrin-containing compound metabolism; protoporphyrin-IX biosynthesis; coproporphyrinogen-III from 5-aminolevulinate: step 4/4. Catalyzes the decarboxylation of four acetate groups of uroporphyrinogen-III to yield coproporphyrinogen-III. In Legionella pneumophila (strain Corby), this protein is Uroporphyrinogen decarboxylase.